An 882-amino-acid polypeptide reads, in one-letter code: Serine/threonine-protein kinase greatwall (882 aa).

An N-acetylmethionine modification is found at methionine 1. One can recognise a Protein kinase domain in the interval 35 to 838; the sequence is FTIVKPISRG…MKELKRHHLF (804 aa). ATP is bound by residues 41–49 and lysine 62; that span reads ISRGAFGKV. The Proton acceptor role is filled by aspartate 156. Phosphothreonine is present on residues threonine 207 and threonine 222. Phosphoserine is present on residues serine 293, serine 371, and serine 454. A Phosphothreonine modification is found at threonine 521. A phosphoserine mark is found at serine 554, serine 558, serine 633, serine 660, and serine 671. A disordered region spans residues 713–736; it reads TPNQVKSGTPYRTPKSVRRGAAPV. Phosphothreonine is present on threonine 725. Phosphoserine is present on serine 728. Phosphothreonine; by CDK1 is present on threonine 744. One can recognise an AGC-kinase C-terminal domain in the interval 839–882; the sequence is SDVDWENLQHQTMPFIPQPDDETDTSYFEARNNAQHLTISGFSL. A phosphoserine mark is found at serine 878 and serine 881.

It belongs to the protein kinase superfamily. AGC Ser/Thr protein kinase family. In terms of processing, phosphorylation at Thr-744 by CDK1 during M phase activates its kinase activity. Maximum phosphorylation occurs in prometaphase.

It localises to the cytoplasm. The protein resides in the cytoskeleton. Its subcellular location is the microtubule organizing center. The protein localises to the centrosome. It is found in the nucleus. It carries out the reaction L-seryl-[protein] + ATP = O-phospho-L-seryl-[protein] + ADP + H(+). The enzyme catalyses L-threonyl-[protein] + ATP = O-phospho-L-threonyl-[protein] + ADP + H(+). Serine/threonine kinase that plays a key role in M phase by acting as a regulator of mitosis entry and maintenance. Acts by promoting the inactivation of protein phosphatase 2A (PP2A) during M phase: does not directly inhibit PP2A but acts by mediating phosphorylation and subsequent activation of ARPP19 and ENSA at 'Ser-62' and 'Ser-67', respectively. ARPP19 and ENSA are phosphatase inhibitors that specifically inhibit the PPP2R2D (PR55-delta) subunit of PP2A. Inactivation of PP2A during M phase is essential to keep cyclin-B1-CDK1 activity high. Following DNA damage, it is also involved in checkpoint recovery by being inhibited. The protein is Serine/threonine-protein kinase greatwall (MASTL) of Ailuropoda melanoleuca (Giant panda).